The primary structure comprises 443 residues: ATP-dependent protease ATPase subunit HslU (443 aa).

ATP is bound by residues Val18 and 60 to 65; that span reads GVGKTE. The segment at 139–160 is disordered; sequence AKNNWGQPEESGEPSSARQNFR. Residues Asp256, Glu321, and Arg393 each contribute to the ATP site.

This sequence belongs to the ClpX chaperone family. HslU subfamily. A double ring-shaped homohexamer of HslV is capped on each side by a ring-shaped HslU homohexamer. The assembly of the HslU/HslV complex is dependent on binding of ATP.

Its subcellular location is the cytoplasm. ATPase subunit of a proteasome-like degradation complex; this subunit has chaperone activity. The binding of ATP and its subsequent hydrolysis by HslU are essential for unfolding of protein substrates subsequently hydrolyzed by HslV. HslU recognizes the N-terminal part of its protein substrates and unfolds these before they are guided to HslV for hydrolysis. This Sodalis glossinidius (strain morsitans) protein is ATP-dependent protease ATPase subunit HslU.